We begin with the raw amino-acid sequence, 64 residues long: ELLQNSGNPCCDPVTCKPREGEHCISGPCCRNCKFKRAGTVCLDAKGDWMNNYCTGISSDCPRN.

The region spanning 1–64 (ELLQNSGNPC…TGISSDCPRN (64 aa)) is the Disintegrin domain. Disulfide bonds link cysteine 10–cysteine 33, cysteine 24–cysteine 30, cysteine 29–cysteine 54, and cysteine 42–cysteine 61. The Cell attachment site; atypical (KGD) signature appears at 46-48 (KGD).

This sequence belongs to the venom metalloproteinase (M12B) family. P-II subfamily. P-IIe sub-subfamily. In terms of assembly, heterodimer with VB7A; disulfide-linked. Expressed by the venom gland.

The protein localises to the secreted. In terms of biological role, poor inhibitor of platelet aggregation. The disintegrin inhibits the adhesion of cells expressing the RGD-dependent integrin alpha-5/beta-1 (ITGA5/ITGB1) to immobilized fibronectin. Inhibition on alpha-IIb/beta-3 (ITGA2B/ITGB3) is low. The protein is Disintegrin VB7B of Vipera berus berus (Common viper).